The following is a 143-amino-acid chain: uncharacterized protein (143 aa).

One can recognise an HTH marR-type domain in the interval 11-139 (EYELTTFIRR…FGELLQRMNK (129 aa)). The segment at residues 53-76 (VKELAESFKLDISTLSRQAAALEA) is a DNA-binding region (H-T-H motif).

This is an uncharacterized protein from Bacillus subtilis (strain 168).